The chain runs to 239 residues: Pimeloyl-[acyl-carrier protein] methyl ester esterase (239 aa).

Residues tryptophan 20, 77–78 (SM), and 138–142 (FISLQ) each bind substrate. The Nucleophile role is filled by serine 77. Catalysis depends on residues aspartate 192 and histidine 220. Residue histidine 220 coordinates substrate.

The protein belongs to the AB hydrolase superfamily. Carboxylesterase BioH family. As to quaternary structure, monomer.

The protein localises to the cytoplasm. The catalysed reaction is 6-carboxyhexanoyl-[ACP] methyl ester + H2O = 6-carboxyhexanoyl-[ACP] + methanol + H(+). Its pathway is cofactor biosynthesis; biotin biosynthesis. Functionally, the physiological role of BioH is to remove the methyl group introduced by BioC when the pimeloyl moiety is complete. It allows to synthesize pimeloyl-ACP via the fatty acid synthetic pathway through the hydrolysis of the ester bonds of pimeloyl-ACP esters. In Legionella pneumophila (strain Lens), this protein is Pimeloyl-[acyl-carrier protein] methyl ester esterase.